The primary structure comprises 281 residues: uncharacterized protein (281 aa).

It is found in the plastid. It localises to the chloroplast. This is an uncharacterized protein from Euglena gracilis.